A 555-amino-acid polypeptide reads, in one-letter code: Inositol 1,4,5-trisphosphate receptor-interacting protein-like 1 (555 aa).

An N-terminal signal peptide occupies residues 1 to 24 (MNVDAEASMAVISLLFLAVMYVVH). Over 25–103 (HPLMVSDRMD…WPFQADGQEG (79 aa)) the chain is Extracellular. A coiled-coil region spans residues 38–74 (LARSRQLEKRMSEEMRLLEMEFEERKRAAEQRQKAEN). The chain crosses the membrane as a helical span at residues 104–124 (PLGWMLGNLWNTGLFCLFLVF). At 125–555 (ELLRQNMQHE…LPHAPLAAAP (431 aa)) the chain is on the cytoplasmic side.

Belongs to the ITPRIP family. Expressed in testis and tumoral cells.

The protein resides in the cell membrane. Its function is as follows. Functions as a ligand of CD3E, inhibiting TCR-CD3 complex signaling to regulate T cell activation. Induces stable CD3E-NCK1 binding, thereby preventing the CD3E-ZAP70 interaction and subsequently inhibiting the activation of the downstream ERK-NFkB signaling cascade and calcium influx. The sequence is that of Inositol 1,4,5-trisphosphate receptor-interacting protein-like 1 from Homo sapiens (Human).